The following is a 459-amino-acid chain: Phosphomethylpyrimidine synthase (459 aa).

Substrate-binding positions include Asn80, Met109, Tyr139, His175, 195 to 197 (SRG), 236 to 239 (DSLR), and Glu275. His279 contributes to the Zn(2+) binding site. Substrate is bound at residue Tyr302. His343 lines the Zn(2+) pocket. The [4Fe-4S] cluster site is built by Cys423, Cys426, and Cys431.

The protein belongs to the ThiC family. [4Fe-4S] cluster is required as a cofactor.

The catalysed reaction is 5-amino-1-(5-phospho-beta-D-ribosyl)imidazole + S-adenosyl-L-methionine = 4-amino-2-methyl-5-(phosphooxymethyl)pyrimidine + CO + 5'-deoxyadenosine + formate + L-methionine + 3 H(+). Its pathway is cofactor biosynthesis; thiamine diphosphate biosynthesis. In terms of biological role, catalyzes the synthesis of the hydroxymethylpyrimidine phosphate (HMP-P) moiety of thiamine from aminoimidazole ribotide (AIR) in a radical S-adenosyl-L-methionine (SAM)-dependent reaction. The chain is Phosphomethylpyrimidine synthase from Gloeothece citriformis (strain PCC 7424) (Cyanothece sp. (strain PCC 7424)).